A 119-amino-acid polypeptide reads, in one-letter code: Ribonuclease P protein component (119 aa).

The protein belongs to the RnpA family. As to quaternary structure, consists of a catalytic RNA component (M1 or rnpB) and a protein subunit.

The enzyme catalyses Endonucleolytic cleavage of RNA, removing 5'-extranucleotides from tRNA precursor.. In terms of biological role, RNaseP catalyzes the removal of the 5'-leader sequence from pre-tRNA to produce the mature 5'-terminus. It can also cleave other RNA substrates such as 4.5S RNA. The protein component plays an auxiliary but essential role in vivo by binding to the 5'-leader sequence and broadening the substrate specificity of the ribozyme. In Bacillus cereus (strain ATCC 14579 / DSM 31 / CCUG 7414 / JCM 2152 / NBRC 15305 / NCIMB 9373 / NCTC 2599 / NRRL B-3711), this protein is Ribonuclease P protein component.